A 540-amino-acid chain; its full sequence is Phosphoenolpyruvate carboxykinase (ATP) (540 aa).

A substrate-binding site is contributed by arginine 65. Lysine 87 is subject to N6-acetyllysine. The substrate site is built by tyrosine 207 and lysine 213. Residues lysine 213, histidine 232, and 248 to 256 (GLSGTGKTT) each bind ATP. Mn(2+)-binding residues include lysine 213 and histidine 232. Aspartate 269 lines the Mn(2+) pocket. ATP-binding positions include glutamate 297, arginine 333, 449-450 (RI), and threonine 455. Arginine 333 is a substrate binding site. The residue at position 523 (lysine 523) is an N6-acetyllysine.

This sequence belongs to the phosphoenolpyruvate carboxykinase (ATP) family. In terms of assembly, monomer. Requires Mn(2+) as cofactor.

Its subcellular location is the cytoplasm. The enzyme catalyses oxaloacetate + ATP = phosphoenolpyruvate + ADP + CO2. It participates in carbohydrate biosynthesis; gluconeogenesis. Involved in the gluconeogenesis. Catalyzes the conversion of oxaloacetate (OAA) to phosphoenolpyruvate (PEP) through direct phosphoryl transfer between the nucleoside triphosphate and OAA. This chain is Phosphoenolpyruvate carboxykinase (ATP), found in Escherichia coli O6:H1 (strain CFT073 / ATCC 700928 / UPEC).